Here is a 547-residue protein sequence, read N- to C-terminus: CTP synthase (547 aa).

The interval 1 to 266 (MTKYIFVTGG…GDYLVERLGL (266 aa)) is amidoligase domain. S13 lines the CTP pocket. Position 13 (S13) interacts with UTP. 14–19 (SVGKGI) contributes to the ATP binding site. Y54 is an L-glutamine binding site. Residue D71 participates in ATP binding. Mg(2+)-binding residues include D71 and E141. CTP is bound by residues 148 to 150 (DIE), 187 to 192 (KTKPTQ), and K223. Residues 187–192 (KTKPTQ) and K223 contribute to the UTP site. In terms of domain architecture, Glutamine amidotransferase type-1 spans 291-533 (PIALVGKYVE…IAAAAQTLLA (243 aa)). Position 353 (G353) interacts with L-glutamine. The active-site Nucleophile; for glutamine hydrolysis is the C380. L-glutamine is bound by residues 381-384 (LGMQ), E404, and R461. Catalysis depends on residues H506 and E508.

Belongs to the CTP synthase family. As to quaternary structure, homotetramer.

The enzyme catalyses UTP + L-glutamine + ATP + H2O = CTP + L-glutamate + ADP + phosphate + 2 H(+). The catalysed reaction is L-glutamine + H2O = L-glutamate + NH4(+). It catalyses the reaction UTP + NH4(+) + ATP = CTP + ADP + phosphate + 2 H(+). The protein operates within pyrimidine metabolism; CTP biosynthesis via de novo pathway; CTP from UDP: step 2/2. Allosterically activated by GTP, when glutamine is the substrate; GTP has no effect on the reaction when ammonia is the substrate. The allosteric effector GTP functions by stabilizing the protein conformation that binds the tetrahedral intermediate(s) formed during glutamine hydrolysis. Inhibited by the product CTP, via allosteric rather than competitive inhibition. Its function is as follows. Catalyzes the ATP-dependent amination of UTP to CTP with either L-glutamine or ammonia as the source of nitrogen. Regulates intracellular CTP levels through interactions with the four ribonucleotide triphosphates. The polypeptide is CTP synthase (Chloroflexus aggregans (strain MD-66 / DSM 9485)).